Reading from the N-terminus, the 327-residue chain is Probable cell division protein WhiA (327 aa).

The H-T-H motif DNA-binding region spans 277 to 310 (EELGRLADPPMTKDAVAGRIRRLLSMADRKAKQD). Positions 304–327 (DRKAKQDGIPDTESAVTPDLLEDA) are disordered.

This sequence belongs to the WhiA family.

Involved in cell division and chromosome segregation. The sequence is that of Probable cell division protein WhiA from Mycolicibacterium vanbaalenii (strain DSM 7251 / JCM 13017 / BCRC 16820 / KCTC 9966 / NRRL B-24157 / PYR-1) (Mycobacterium vanbaalenii).